Reading from the N-terminus, the 342-residue chain is GTPase Obg (342 aa).

The Obg domain occupies 1–159 (MKFLDEAKVY…HWLWLRLKLI (159 aa)). The region spanning 160–327 (ADAGLVGLPN…ALRALMAAMD (168 aa)) is the OBG-type G domain. GTP is bound by residues 166–173 (GLPNAGKS), 191–195 (FTTLH), 212–215 (DIPG), 279–282 (SKAD), and 308–310 (SAA). 2 residues coordinate Mg(2+): serine 173 and threonine 193.

This sequence belongs to the TRAFAC class OBG-HflX-like GTPase superfamily. OBG GTPase family. As to quaternary structure, monomer. Requires Mg(2+) as cofactor.

Its subcellular location is the cytoplasm. In terms of biological role, an essential GTPase which binds GTP, GDP and possibly (p)ppGpp with moderate affinity, with high nucleotide exchange rates and a fairly low GTP hydrolysis rate. Plays a role in control of the cell cycle, stress response, ribosome biogenesis and in those bacteria that undergo differentiation, in morphogenesis control. The polypeptide is GTPase Obg (Methylobacterium nodulans (strain LMG 21967 / CNCM I-2342 / ORS 2060)).